The sequence spans 222 residues: V-type ATP synthase subunit D (222 aa).

This sequence belongs to the V-ATPase D subunit family.

Its function is as follows. Produces ATP from ADP in the presence of a proton gradient across the membrane. This chain is V-type ATP synthase subunit D, found in Deinococcus geothermalis (strain DSM 11300 / CIP 105573 / AG-3a).